A 229-amino-acid chain; its full sequence is Large ribosomal subunit protein uL1 (229 aa).

This sequence belongs to the universal ribosomal protein uL1 family. As to quaternary structure, part of the 50S ribosomal subunit.

Its function is as follows. Binds directly to 23S rRNA. The L1 stalk is quite mobile in the ribosome, and is involved in E site tRNA release. In terms of biological role, protein L1 is also a translational repressor protein, it controls the translation of the L11 operon by binding to its mRNA. The polypeptide is Large ribosomal subunit protein uL1 (Clostridium perfringens (strain ATCC 13124 / DSM 756 / JCM 1290 / NCIMB 6125 / NCTC 8237 / Type A)).